Here is a 93-residue protein sequence, read N- to C-terminus: Putative pterin-4-alpha-carbinolamine dehydratase (93 aa).

Belongs to the pterin-4-alpha-carbinolamine dehydratase family.

It catalyses the reaction (4aS,6R)-4a-hydroxy-L-erythro-5,6,7,8-tetrahydrobiopterin = (6R)-L-erythro-6,7-dihydrobiopterin + H2O. The polypeptide is Putative pterin-4-alpha-carbinolamine dehydratase (Trichodesmium erythraeum (strain IMS101)).